A 393-amino-acid polypeptide reads, in one-letter code: Prokineticin receptor 1 (393 aa).

Topologically, residues 1–62 (METTMGFMDD…TNSRTFFAAK (62 aa)) are extracellular. N-linked (GlcNAc...) asparagine glycans are attached at residues Asn-11, Asn-14, and Asn-36. Residues 63 to 83 (IVIGMALVGIMLVCGIGNFIF) form a helical membrane-spanning segment. Topologically, residues 84–98 (IAALVRYKKLRNLTN) are cytoplasmic. A helical membrane pass occupies residues 99–119 (LLIANLAISDFLVAIVCCPFE). Topologically, residues 120–146 (MDYYVVRQLSWEHGHVLCTSVNYLRTV) are extracellular. Cysteines 137 and 217 form a disulfide. A helical transmembrane segment spans residues 147–167 (SLYVSTNALLAIAIDRYLAIV). Topologically, residues 168–180 (HPLRPRMKCQTAT) are cytoplasmic. Residues 181–201 (GLIALVWTVSILIAIPSAYFT) form a helical membrane-spanning segment. Over 202-232 (TETVLVIVKSQEKIFCGQIWPVDQQLYYKSY) the chain is Extracellular. Residues 233-253 (FLFIFGIEFVGPVVTMTLCYA) traverse the membrane as a helical segment. The Cytoplasmic segment spans residues 254-282 (RISRELWFKAVPGFQTEQIRKRLRCRRKT). A helical transmembrane segment spans residues 283–303 (VLVLMCILTAYVLCWAPFYGF). Over 304-322 (TIVRDFFPTVFVKEKHYLT) the chain is Extracellular. The chain crosses the membrane as a helical span at residues 323–343 (AFYIVECIAMSNSMINTLCFV). Topologically, residues 344 to 393 (TVKNDTVKYFKKIMLLHWKASYNGGKSSADLDLKTIGMPATEEVDCIRLK) are cytoplasmic.

Belongs to the G-protein coupled receptor 1 family. Localizes to glandular epithelium, stroma and vascular endothelial cells of first trimester decidua (at protein level). Up-regulated in first trimester decidua when compared with non-pregnant endometrium. Expressed in the stomach, throughout the small intestine, colon, rectum, thyroid gland, pituitary gland, salivary gland, adrenal gland, testis, ovary, brain, spleen, prostate and pancreas.

The protein resides in the cell membrane. In terms of biological role, receptor for prokineticin 1. Exclusively coupled to the G(q) subclass of heteromeric G proteins. Activation leads to mobilization of calcium, stimulation of phosphoinositide turnover and activation of p44/p42 mitogen-activated protein kinase. May play a role during early pregnancy. The polypeptide is Prokineticin receptor 1 (PROKR1) (Homo sapiens (Human)).